The chain runs to 1465 residues: Transcriptional elongation regulator MINIYO (1465 aa).

3 disordered regions span residues Lys-27–Arg-85, Leu-186–Ile-211, and Thr-1113–Ile-1135.

It belongs to the RPAP1 family. As to quaternary structure, interacts with HAG3, NRPB3 and NRPB10L. Expressed in root and shoot apices and in leaf and flower primordia. Detected in the endosperm, embryo, meristems and in organ primordia, but not in mature cells. Found exclusively in the vascular bundles in mature leaves.

The protein localises to the cytoplasm. Its subcellular location is the nucleus. In terms of biological role, positive regulator of transcriptional elongation that is essential for cells to initiate differentiation. Interacts with RNA polymerase II and the Elongator complex and is required to sustain global levels of transcriptional elongation activity, specifically in differentiating tissues. In Arabidopsis thaliana (Mouse-ear cress), this protein is Transcriptional elongation regulator MINIYO.